Here is a 278-residue protein sequence, read N- to C-terminus: Large ribosomal subunit protein uL2 (278 aa).

Residues 202–278 (ANINDGKAGR…IMRSRHQRKK (77 aa)) are disordered.

This sequence belongs to the universal ribosomal protein uL2 family. In terms of assembly, part of the 50S ribosomal subunit. Forms a bridge to the 30S subunit in the 70S ribosome.

Its function is as follows. One of the primary rRNA binding proteins. Required for association of the 30S and 50S subunits to form the 70S ribosome, for tRNA binding and peptide bond formation. It has been suggested to have peptidyltransferase activity; this is somewhat controversial. Makes several contacts with the 16S rRNA in the 70S ribosome. The polypeptide is Large ribosomal subunit protein uL2 (Rhizobium johnstonii (strain DSM 114642 / LMG 32736 / 3841) (Rhizobium leguminosarum bv. viciae)).